A 57-amino-acid chain; its full sequence is Potassium channel toxin alpha-KTx 23.3 (57 aa).

An N-terminal signal peptide occupies residues 1–23; the sequence is MKMSIVIILLLFTCLIATNGASG. 4 cysteine pairs are disulfide-bonded: C26-C46, C32-C51, C36-C53, and C41-C56.

It belongs to the short scorpion toxin superfamily. Potassium channel inhibitor family. Alpha-KTx 23 subfamily. Expressed by the venom gland.

The protein resides in the secreted. This toxin shows both immunosuppressive and anti-inflammatory activities. It has the potential to inhibit human T cell activation, since it reduces IL-2 secretion and the expression of T cell activation marker CD69 and acts as an anti-inflammatory agent, since it provokes the reduction of secretion of both IFN-gamma and TNF-alpha. In vivo, the delayed-type hypersensitivity response in rat autoimmune disease model is ameliorated in the presence of this toxin. Acts by blocking Kv1.3/KCNA3 potassium channels of T-lymphocytes. The protein is Potassium channel toxin alpha-KTx 23.3 of Scorpiops tibetanus (Scorpion).